The following is a 457-amino-acid chain: Chromosomal replication initiator protein DnaA (457 aa).

Positions 1–77 are domain I, interacts with DnaA modulators; that stretch reads MDTNNNIEKE…EILSQNKVGM (77 aa). Residues 77–108 are domain II; it reads MHLAHSVDVRIEVAPKIQVNAQSNINYKATKT. The tract at residues 109 to 323 is domain III, AAA+ region; that stretch reads SVKDSYTFEN…GAIIKISVNA (215 aa). Residues Gly-153, Gly-155, Lys-156, and Thr-157 each contribute to the ATP site. Residues 324 to 457 are domain IV, binds dsDNA; sequence NLMNATIDLN…DKKTAFNSSE (134 aa).

Belongs to the DnaA family. Oligomerizes as a right-handed, spiral filament on DNA at oriC.

It localises to the cytoplasm. Functionally, plays an essential role in the initiation and regulation of chromosomal replication. ATP-DnaA binds to the origin of replication (oriC) to initiate formation of the DNA replication initiation complex once per cell cycle. Binds the DnaA box (a 9 base pair repeat at the origin) and separates the double-stranded (ds)DNA. Forms a right-handed helical filament on oriC DNA; dsDNA binds to the exterior of the filament while single-stranded (ss)DNA is stabiized in the filament's interior. The ATP-DnaA-oriC complex binds and stabilizes one strand of the AT-rich DNA unwinding element (DUE), permitting loading of DNA polymerase. After initiation quickly degrades to an ADP-DnaA complex that is not apt for DNA replication. Binds acidic phospholipids. The chain is Chromosomal replication initiator protein DnaA from Helicobacter pylori (strain J99 / ATCC 700824) (Campylobacter pylori J99).